The primary structure comprises 491 residues: Cytochrome P450 2B3 (491 aa).

Cys-436 serves as a coordination point for heme.

Belongs to the cytochrome P450 family. Heme is required as a cofactor. As to expression, liver. Not found in the lung, kidney and prostate.

It localises to the endoplasmic reticulum membrane. It is found in the microsome membrane. It catalyses the reaction an organic molecule + reduced [NADPH--hemoprotein reductase] + O2 = an alcohol + oxidized [NADPH--hemoprotein reductase] + H2O + H(+). In terms of biological role, cytochromes P450 are a group of heme-thiolate monooxygenases. In liver microsomes, this enzyme is involved in an NADPH-dependent electron transport pathway. It oxidizes a variety of structurally unrelated compounds, including steroids, fatty acids, and xenobiotics. The sequence is that of Cytochrome P450 2B3 (Cyp2b3) from Rattus norvegicus (Rat).